A 370-amino-acid chain; its full sequence is 3-dehydroquinate synthase (370 aa).

Residues 112-116 (GVVGD), 136-137 (TS), Lys149, Lys158, and 176-179 (TLRT) each bind NAD(+). Residues Glu191, His254, and His276 each contribute to the Zn(2+) site.

This sequence belongs to the sugar phosphate cyclases superfamily. Dehydroquinate synthase family. The cofactor is Co(2+). Zn(2+) is required as a cofactor. Requires NAD(+) as cofactor.

The protein resides in the cytoplasm. It carries out the reaction 7-phospho-2-dehydro-3-deoxy-D-arabino-heptonate = 3-dehydroquinate + phosphate. It participates in metabolic intermediate biosynthesis; chorismate biosynthesis; chorismate from D-erythrose 4-phosphate and phosphoenolpyruvate: step 2/7. Functionally, catalyzes the conversion of 3-deoxy-D-arabino-heptulosonate 7-phosphate (DAHP) to dehydroquinate (DHQ). This is 3-dehydroquinate synthase from Xanthomonas campestris pv. campestris (strain 8004).